Reading from the N-terminus, the 43-residue chain is Protein PsbN (43 aa).

The helical transmembrane segment at 7 to 27 (LIVAIAAVTICITAFAIYTAF) threads the bilayer.

The protein belongs to the PsbN family.

Its subcellular location is the cellular thylakoid membrane. Its function is as follows. May play a role in photosystem I and II biogenesis. This is Protein PsbN from Synechococcus sp. (strain JA-2-3B'a(2-13)) (Cyanobacteria bacterium Yellowstone B-Prime).